We begin with the raw amino-acid sequence, 308 residues long: Ribosomal RNA small subunit methyltransferase H (308 aa).

S-adenosyl-L-methionine is bound by residues 36–38, D55, F82, D103, and Q110; that span reads GGH.

The protein belongs to the methyltransferase superfamily. RsmH family.

The protein localises to the cytoplasm. It carries out the reaction cytidine(1402) in 16S rRNA + S-adenosyl-L-methionine = N(4)-methylcytidine(1402) in 16S rRNA + S-adenosyl-L-homocysteine + H(+). Specifically methylates the N4 position of cytidine in position 1402 (C1402) of 16S rRNA. The polypeptide is Ribosomal RNA small subunit methyltransferase H (Helicobacter pylori (strain ATCC 700392 / 26695) (Campylobacter pylori)).